The chain runs to 248 residues: Ras-like protein family member 11B (248 aa).

The tract at residues 30 to 248 (ASSRVIKIAV…SSKVRTATSV (219 aa)) is small GTPase-like. Residues 41-48 (GGSGVGKT), 88-99 (DTPGVQINEQNL), and 153-156 (NKAD) contribute to the GTP site. Residues 206–228 (QNTGTSERRKNSIIPRPKSPNMQ) are disordered.

Belongs to the small GTPase superfamily. Ras family.

It carries out the reaction GTP + H2O = GDP + phosphate + H(+). In Xenopus laevis (African clawed frog), this protein is Ras-like protein family member 11B.